The primary structure comprises 367 residues: MSLAHQVLAVNNDLPIRTDKPVHSGKVRSVYWLTAEDSARLIKEKGYNVAADAPLAIMVISDRLSAFDCIWHAEGDVRGVPGKGAALNAISNHWFELFRQNGLADSHILDIPHPFIWIVQKAKPVMIEAICRQYITGSMWRAYSKGERNFCGINLEDGLQKDQKLSELLITPSTKGILKGVPGVPEVDDVNITRADIENNFAAFQFKQKSDIDQYEKLLKEGFNLISGALEELDQIFVDTKFEFGYVTDASGNDKLIYMDEVGTPDSSRIWDGENYRNGKIIEKSKEGFRQTLLSHFPDPDILLNKDRMPERQALAQDNALPIDVFMDLSSTYLDIAEKITGQKIVLSENPKQEIIDILARDFDVII.

It belongs to the SAICAR synthetase family.

It catalyses the reaction 5-amino-1-(5-phospho-D-ribosyl)imidazole-4-carboxylate + L-aspartate + ATP = (2S)-2-[5-amino-1-(5-phospho-beta-D-ribosyl)imidazole-4-carboxamido]succinate + ADP + phosphate + 2 H(+). The protein operates within purine metabolism; IMP biosynthesis via de novo pathway; 5-amino-1-(5-phospho-D-ribosyl)imidazole-4-carboxamide from 5-amino-1-(5-phospho-D-ribosyl)imidazole-4-carboxylate: step 1/2. This chain is Phosphoribosylaminoimidazole-succinocarboxamide synthase, found in Saccharophagus degradans (strain 2-40 / ATCC 43961 / DSM 17024).